Reading from the N-terminus, the 149-residue chain is Oocyte-expressed protein homolog (149 aa).

The interval 1 to 22 is disordered; sequence MVDDAGAAESQRGKQTPAHSLE. The region spanning 49 to 110 is the KH; atypical domain; that stretch reads PLVFYLEAWL…RVQNRVKSML (62 aa).

It belongs to the KHDC1 family. Component of the subcortical maternal complex (SCMC), at least composed of NLRP5, KHDC3L, OOEP, and TLE6 isoform 1. Within the complex, interacts with NLRP5, KHDC3L and TLE6 isoform 1. As part of the SCMC interacts with the SCMC-associated protein NLRP4F. The SCMC may facilitate translocation of its components between the nuclear and cytoplasmic compartments. Forms a scaffold complex with KHDC3L/FILIA, and interacts with BLM and TRIM25 at DNA replication forks.

Its subcellular location is the cytoplasm. It localises to the nucleus. Functionally, component of the subcortical maternal complex (SCMC), a multiprotein complex that plays a key role in early embryonic development. The SCMC complex is a structural constituent of cytoplasmic lattices, which consist in fibrous structures found in the cytoplasm of oocytes and preimplantation embryos. They are required to store maternal proteins critical for embryonic development, such as proteins that control epigenetic reprogramming of the preimplantation embryo, and prevent their degradation or activation. As part of the OOEP-KHDC3 scaffold, recruits BLM and TRIM25 to DNA replication forks, thereby promoting the ubiquitination of BLM by TRIM25, enhancing BLM retainment at replication forks and therefore promoting stalled replication fork restart. Positively regulates the homologous recombination-mediated DNA double-strand break (DSB) repair pathway by regulating ATM activation and RAD51 recruitment to DSBs in oocytes. Thereby contributes to oocyte survival and the resumption and completion of meiosis. The protein is Oocyte-expressed protein homolog of Homo sapiens (Human).